The primary structure comprises 640 residues: 1-deoxy-D-xylulose-5-phosphate synthase (640 aa).

Thiamine diphosphate is bound by residues His-78 and 119–121 (GHS). Residue Asp-151 coordinates Mg(2+). Residues 152–153 (GA), Asn-180, Tyr-289, and Glu-371 contribute to the thiamine diphosphate site. Asn-180 serves as a coordination point for Mg(2+).

Belongs to the transketolase family. DXPS subfamily. Homodimer. It depends on Mg(2+) as a cofactor. Thiamine diphosphate serves as cofactor.

It carries out the reaction D-glyceraldehyde 3-phosphate + pyruvate + H(+) = 1-deoxy-D-xylulose 5-phosphate + CO2. The protein operates within metabolic intermediate biosynthesis; 1-deoxy-D-xylulose 5-phosphate biosynthesis; 1-deoxy-D-xylulose 5-phosphate from D-glyceraldehyde 3-phosphate and pyruvate: step 1/1. Catalyzes the acyloin condensation reaction between C atoms 2 and 3 of pyruvate and glyceraldehyde 3-phosphate to yield 1-deoxy-D-xylulose-5-phosphate (DXP). The protein is 1-deoxy-D-xylulose-5-phosphate synthase of Bartonella henselae (strain ATCC 49882 / DSM 28221 / CCUG 30454 / Houston 1) (Rochalimaea henselae).